The chain runs to 349 residues: uncharacterized protein (349 aa).

Transmembrane regions (helical) follow at residues 15-35, 53-73, 91-111, 120-140, 147-167, 179-199, 218-238, 248-268, 276-296, and 302-322; these read VHSP…NPVT, ISFC…MILI, WFLL…LMFS, NVVL…ILLL, LSMV…FWGV, FGLG…TTIL, LLGT…DHFM, WMLI…LAGL, INLA…LILL, and AQYL…IDNL. 2 consecutive EamA domains span residues 39 to 164 and 191 to 319; these read IELG…VTVF and FISA…LSFI.

Belongs to the EamA transporter family.

It localises to the cell membrane. This is an uncharacterized protein from Synechocystis sp. (strain ATCC 27184 / PCC 6803 / Kazusa).